The following is a 227-amino-acid chain: MLTGGALWVDAWLWRGPMLTLAVGGLAFVLYFFRDPERTPPADALEAGIVAPADGRVVEIAEEDDPLYLEGPARRISIFLSPLDVHVNRVPARGVIEHAEYRPGDYLVAWHPKASEKNERSEFGLRHPTGTKLLFKQIAGAVARRIEYDLREGDTVETGARFGIVKFGSRMDLLVPPSVELHAKEGQVVRAGTTVLGRIPTPESGRSSSAEATAAPSASSARRSSAS.

Residue Ser169 is the Schiff-base intermediate with substrate; via pyruvic acid of the active site. Ser169 is subject to Pyruvic acid (Ser); by autocatalysis. A disordered region spans residues 197–227 (GRIPTPESGRSSSAEATAAPSASSARRSSAS). Residues 206 to 227 (RSSSAEATAAPSASSARRSSAS) are compositionally biased toward low complexity.

Belongs to the phosphatidylserine decarboxylase family. PSD-A subfamily. As to quaternary structure, heterodimer of a large membrane-associated beta subunit and a small pyruvoyl-containing alpha subunit. Pyruvate serves as cofactor. Is synthesized initially as an inactive proenzyme. Formation of the active enzyme involves a self-maturation process in which the active site pyruvoyl group is generated from an internal serine residue via an autocatalytic post-translational modification. Two non-identical subunits are generated from the proenzyme in this reaction, and the pyruvate is formed at the N-terminus of the alpha chain, which is derived from the carboxyl end of the proenzyme. The post-translation cleavage follows an unusual pathway, termed non-hydrolytic serinolysis, in which the side chain hydroxyl group of the serine supplies its oxygen atom to form the C-terminus of the beta chain, while the remainder of the serine residue undergoes an oxidative deamination to produce ammonia and the pyruvoyl prosthetic group on the alpha chain.

The protein resides in the cell membrane. The enzyme catalyses a 1,2-diacyl-sn-glycero-3-phospho-L-serine + H(+) = a 1,2-diacyl-sn-glycero-3-phosphoethanolamine + CO2. It functions in the pathway phospholipid metabolism; phosphatidylethanolamine biosynthesis; phosphatidylethanolamine from CDP-diacylglycerol: step 2/2. In terms of biological role, catalyzes the formation of phosphatidylethanolamine (PtdEtn) from phosphatidylserine (PtdSer). This chain is Phosphatidylserine decarboxylase proenzyme, found in Salinibacter ruber (strain DSM 13855 / M31).